The following is a 427-amino-acid chain: UPF0229 protein YeaH (427 aa).

The segment covering 79–90 (NDHFVQNDRIER) has biased composition (basic and acidic residues). Residues 79 to 110 (NDHFVQNDRIERPQGGGGGSGSGQGQASQDGE) are disordered. A compositionally biased stretch (gly residues) spans 92–102 (QGGGGGSGSGQ).

This sequence belongs to the UPF0229 family.

This chain is UPF0229 protein YeaH, found in Escherichia coli O127:H6 (strain E2348/69 / EPEC).